The following is a 1551-amino-acid chain: Dual oxidase 1 (1551 aa).

The first 21 residues, 1–21 (MGFCLALAWTLLVGAWTPLGA), serve as a signal peptide directing secretion. The Extracellular segment spans residues 22-596 (QNPISWEVQR…YFEGSGFGFG (575 aa)). Residues 26–593 (SWEVQRFDGW…VRDYFEGSGF (568 aa)) form a peroxidase-like; mediates peroxidase activity region. N-linked (GlcNAc...) asparagine glycosylation is present at asparagine 94. A disordered region spans residues 150-172 (RWDPETGRSPSNPRDPANQVTGW). N-linked (GlcNAc...) asparagine glycosylation is found at asparagine 342, asparagine 354, asparagine 461, and asparagine 534. The helical transmembrane segment at 597 to 617 (VTIGTLCCFPLVSLLSAWIVA) threads the bilayer. Over 618-1044 (RLRMRNFKRL…KRFIENYRRH (427 aa)) the chain is Cytoplasmic. EF-hand domains are found at residues 815–850 (PQDM…FMKG), 851–886 (SPEE…FIEI), and 895–930 (QLAE…HNSE). Residues aspartate 828, aspartate 830, asparagine 832, tyrosine 834, glutamate 839, aspartate 864, aspartate 866, asparagine 868, and glutamate 875 each coordinate Ca(2+). An interaction with TXNDC11 region spans residues 956–1248 (YISQDMICPS…GSFALIQLPR (293 aa)). The chain crosses the membrane as a helical span at residues 1045–1065 (IGCVAVFYAIAGGLFLERAYY). At 1066–1080 (YAFAAHHTGITDTTR) the chain is on the extracellular side. Residues 1081–1101 (VGIILSRGTAASISFMFSYIL) form a helical membrane-spanning segment. In terms of domain architecture, Ferric oxidoreductase spans 1087–1269 (RGTAASISFM…YGGDKLVSLS (183 aa)). The Cytoplasmic portion of the chain corresponds to 1102–1148 (LTMCRNLITFLRETFLNRYVPFDAAVDFHRLIASTAIVLTVLHSVGH). A helical transmembrane segment spans residues 1149-1171 (VVNVYLFSISPLSVLSCLFPGLF). Residues 1172 to 1188 (HDDGSELPQKYYWWFFQ) lie on the Extracellular side of the membrane. Residues 1189-1209 (TVPGLTGVVLLLILAIMYVFA) form a helical membrane-spanning segment. The Cytoplasmic portion of the chain corresponds to 1210-1226 (SHHFRRRSFRGFWLTHH). The helical transmembrane segment at 1227–1247 (LYILLYVLLIIHGSFALIQLP) threads the bilayer. Residue arginine 1248 is a topological domain, extracellular. The helical transmembrane segment at 1249 to 1269 (FHIFFLVPAIIYGGDKLVSLS) threads the bilayer. Residues 1270 to 1376 (RKKVEISVVK…DGPFGEGHQE (107 aa)) form the FAD-binding FR-type domain. At 1270 to 1551 (RKKVEISVVK…THFSHHYENF (282 aa)) the chain is on the cytoplasmic side.

This sequence in the N-terminal section; belongs to the peroxidase family. Interacts with TXNDC11, TPO and CYBA. In terms of processing, N-glycosylated. As to expression, expressed in thyrocytes and tracheal surface epithelial cells (at protein level). Expressed in thyroid, trachea, bronchium, and to a lower extent, in placenta, testis, prostate, pancreas and heart.

The protein resides in the apical cell membrane. The catalysed reaction is NADH + O2 + H(+) = H2O2 + NAD(+). It carries out the reaction NADPH + O2 + H(+) = H2O2 + NADP(+). It participates in hormone biosynthesis; thyroid hormone biosynthesis. Its activity is regulated as follows. The NADPH oxidase activity is calcium-dependent. Peroxidase activity is inhibited by aminobenzohydrazide. Its function is as follows. Generates hydrogen peroxide which is required for the activity of thyroid peroxidase/TPO and lactoperoxidase/LPO. Plays a role in thyroid hormones synthesis and lactoperoxidase-mediated antimicrobial defense at the surface of mucosa. May have its own peroxidase activity through its N-terminal peroxidase-like domain. This Homo sapiens (Human) protein is Dual oxidase 1 (DUOX1).